Here is a 98-residue protein sequence, read N- to C-terminus: Cell division topological specificity factor (98 aa).

Belongs to the MinE family.

Prevents the cell division inhibition by proteins MinC and MinD at internal division sites while permitting inhibition at polar sites. This ensures cell division at the proper site by restricting the formation of a division septum at the midpoint of the long axis of the cell. The protein is Cell division topological specificity factor of Moorella thermoacetica (strain ATCC 39073 / JCM 9320).